Here is a 203-residue protein sequence, read N- to C-terminus: 3-isopropylmalate dehydratase small subunit (203 aa).

Belongs to the LeuD family. LeuD type 1 subfamily. Heterodimer of LeuC and LeuD.

The catalysed reaction is (2R,3S)-3-isopropylmalate = (2S)-2-isopropylmalate. The protein operates within amino-acid biosynthesis; L-leucine biosynthesis; L-leucine from 3-methyl-2-oxobutanoate: step 2/4. In terms of biological role, catalyzes the isomerization between 2-isopropylmalate and 3-isopropylmalate, via the formation of 2-isopropylmaleate. The chain is 3-isopropylmalate dehydratase small subunit from Rhodospirillum centenum (strain ATCC 51521 / SW).